The following is a 192-amino-acid chain: MTLIFIMISAIFVNNFVLSRFLGICPFLGVSKQVETAVGMGVAVTFVMALASAITYVVQYAILDPLSLGYLQTIAFILIIAALVQLVEMIIKKSSPSLYQALGVYLPLITTNCAVLGVALINIQNEYNFIETIFNGVGAALGFTLAIVLFAGIRERLETSAVPKALEGFPIALLTAGLMAIAFLGFSGMKLG.

Helical transmembrane passes span isoleucine 4–isoleucine 24, valine 38–valine 58, leucine 71–isoleucine 91, alanine 101–isoleucine 121, isoleucine 133–isoleucine 153, and phenylalanine 169–methionine 189.

It belongs to the NqrDE/RnfAE family. The complex is composed of six subunits: RnfA, RnfB, RnfC, RnfD, RnfE and RnfG.

It localises to the cell membrane. It catalyses the reaction 2 reduced [2Fe-2S]-[ferredoxin] + Na(+)(in) + NAD(+) + H(+) = 2 oxidized [2Fe-2S]-[ferredoxin] + Na(+)(out) + NADH. In terms of biological role, part of a membrane-bound complex that couples electron transfer with translocation of ions across the membrane. Couples electron transfer from reduced ferredoxin to NAD(+) with electrogenic movement of Na(+) out of the cell. Involved in caffeate respiration. The chain is Na(+)-translocating ferredoxin:NAD(+) oxidoreductase complex subunit A from Acetobacterium woodii (strain ATCC 29683 / DSM 1030 / JCM 2381 / KCTC 1655 / WB1).